Reading from the N-terminus, the 378-residue chain is Chaperone protein DnaJ (378 aa).

The region spanning 5–69 (EYYDRLGVSK…QKRAAYDQYG (65 aa)) is the J domain. Residues 134–216 (GVEKEVSYNR…CHGTGHEKQA (83 aa)) form a CR-type zinc finger. Cys-147, Cys-150, Cys-164, Cys-167, Cys-190, Cys-193, Cys-204, and Cys-207 together coordinate Zn(2+). CXXCXGXG motif repeat units follow at residues 147-154 (CGTCLGSG), 164-171 (CRKCHGSG), 190-197 (CDICHGSG), and 204-211 (CQTCHGTG).

The protein belongs to the DnaJ family. Homodimer. Requires Zn(2+) as cofactor.

It is found in the cytoplasm. Functionally, participates actively in the response to hyperosmotic and heat shock by preventing the aggregation of stress-denatured proteins and by disaggregating proteins, also in an autonomous, DnaK-independent fashion. Unfolded proteins bind initially to DnaJ; upon interaction with the DnaJ-bound protein, DnaK hydrolyzes its bound ATP, resulting in the formation of a stable complex. GrpE releases ADP from DnaK; ATP binding to DnaK triggers the release of the substrate protein, thus completing the reaction cycle. Several rounds of ATP-dependent interactions between DnaJ, DnaK and GrpE are required for fully efficient folding. Also involved, together with DnaK and GrpE, in the DNA replication of plasmids through activation of initiation proteins. This chain is Chaperone protein DnaJ, found in Streptococcus pyogenes serotype M1.